A 660-amino-acid chain; its full sequence is Bifunctional polymyxin resistance protein ArnA (660 aa).

The tract at residues M1–I304 is formyltransferase ArnAFT. H104 serves as the catalytic Proton donor; for formyltransferase activity. Residues R114 and V136–D140 contribute to the (6R)-10-formyltetrahydrofolate site. The interval R314–A660 is dehydrogenase ArnADH. Residues D347 and D368–I369 each bind NAD(+). Residues A393, Y398, and T432 to S433 contribute to the UDP-alpha-D-glucuronate site. The Proton acceptor; for decarboxylase activity role is filled by E434. Residues R460, N492, K526–R535, and Y613 each bind UDP-alpha-D-glucuronate. The active-site Proton donor; for decarboxylase activity is the R619.

This sequence in the N-terminal section; belongs to the Fmt family. UDP-L-Ara4N formyltransferase subfamily. The protein in the C-terminal section; belongs to the NAD(P)-dependent epimerase/dehydratase family. UDP-glucuronic acid decarboxylase subfamily. As to quaternary structure, homohexamer, formed by a dimer of trimers.

It carries out the reaction UDP-alpha-D-glucuronate + NAD(+) = UDP-beta-L-threo-pentopyranos-4-ulose + CO2 + NADH. It catalyses the reaction UDP-4-amino-4-deoxy-beta-L-arabinose + (6R)-10-formyltetrahydrofolate = UDP-4-deoxy-4-formamido-beta-L-arabinose + (6S)-5,6,7,8-tetrahydrofolate + H(+). The protein operates within nucleotide-sugar biosynthesis; UDP-4-deoxy-4-formamido-beta-L-arabinose biosynthesis; UDP-4-deoxy-4-formamido-beta-L-arabinose from UDP-alpha-D-glucuronate: step 1/3. It functions in the pathway nucleotide-sugar biosynthesis; UDP-4-deoxy-4-formamido-beta-L-arabinose biosynthesis; UDP-4-deoxy-4-formamido-beta-L-arabinose from UDP-alpha-D-glucuronate: step 3/3. It participates in bacterial outer membrane biogenesis; lipopolysaccharide biosynthesis. In terms of biological role, bifunctional enzyme that catalyzes the oxidative decarboxylation of UDP-glucuronic acid (UDP-GlcUA) to UDP-4-keto-arabinose (UDP-Ara4O) and the addition of a formyl group to UDP-4-amino-4-deoxy-L-arabinose (UDP-L-Ara4N) to form UDP-L-4-formamido-arabinose (UDP-L-Ara4FN). The modified arabinose is attached to lipid A and is required for resistance to polymyxin and cationic antimicrobial peptides. This Enterobacter sp. (strain 638) protein is Bifunctional polymyxin resistance protein ArnA.